Here is a 337-residue protein sequence, read N- to C-terminus: MRVLGIETSCDETGIAIYDDKKGLLANQLYSQVKLHADYGGVVPELASRDHVRKTVPLIQAALKEAGLTASDIDAVAYTAGPGLVGALLVGATVGRSLAFAWTVPAIPVHHMEGHLLAPMLEDNPPDFPFVALLVSGGHTQLISVTGIGQYELLGESIDDAAGEAFDKTAKLLGLDYPGGPMLSKMASQGTAGRFVFPRPMTDRPGLDFSFSGLKTFAANTIRSNGDDEQTRADIARAFEDAVVDTLMIKCKRALESTGFKRLVMAGGVSANRTLRAKLAEMMQKRRGEVFYARPEFCTDNGAMIAYAGMVRFKAGVTADLGVTVRPRWPLAELPAA.

The Fe cation site is built by His111 and His115. Substrate-binding positions include 134–138, Asp167, Gly180, and Asn272; that span reads LVSGG. Fe cation is bound at residue Asp300.

This sequence belongs to the KAE1 / TsaD family. It depends on Fe(2+) as a cofactor.

The protein localises to the cytoplasm. The catalysed reaction is L-threonylcarbamoyladenylate + adenosine(37) in tRNA = N(6)-L-threonylcarbamoyladenosine(37) in tRNA + AMP + H(+). Functionally, required for the formation of a threonylcarbamoyl group on adenosine at position 37 (t(6)A37) in tRNAs that read codons beginning with adenine. Is involved in the transfer of the threonylcarbamoyl moiety of threonylcarbamoyl-AMP (TC-AMP) to the N6 group of A37, together with TsaE and TsaB. TsaD likely plays a direct catalytic role in this reaction. The chain is tRNA N6-adenosine threonylcarbamoyltransferase from Salmonella schwarzengrund (strain CVM19633).